The following is a 263-amino-acid chain: Expansin-like A3 (263 aa).

The signal sequence occupies residues 1–20 (MRSFLYLIVVIFLFSSSVNA). Residues 41–147 (SGACAYGPMA…QRVPCNYGKR (107 aa)) form the Expansin-like EG45 domain. 2 N-linked (GlcNAc...) asparagine glycosylation sites follow: Asn-99 and Asn-102. Residues 161–243 (NYLAIKLLYQ…NWNSGRIYDA (83 aa)) form the Expansin-like CBD domain.

The protein belongs to the expansin family. Expansin-like A subfamily.

It is found in the secreted. This is Expansin-like A3 (EXLA3) from Arabidopsis thaliana (Mouse-ear cress).